The chain runs to 436 residues: Glutamyl-tRNA(Gln) amidotransferase subunit D (436 aa).

In terms of domain architecture, Asparaginase/glutaminase spans 91 to 420 (QNISIISTGG…GEVAKLMNKN (330 aa)). Catalysis depends on residues Thr101, Thr177, Asp178, and Lys254.

This sequence belongs to the asparaginase 1 family. GatD subfamily. As to quaternary structure, heterodimer of GatD and GatE.

It catalyses the reaction L-glutamyl-tRNA(Gln) + L-glutamine + ATP + H2O = L-glutaminyl-tRNA(Gln) + L-glutamate + ADP + phosphate + H(+). Functionally, allows the formation of correctly charged Gln-tRNA(Gln) through the transamidation of misacylated Glu-tRNA(Gln) in organisms which lack glutaminyl-tRNA synthetase. The reaction takes place in the presence of glutamine and ATP through an activated gamma-phospho-Glu-tRNA(Gln). The GatDE system is specific for glutamate and does not act on aspartate. The sequence is that of Glutamyl-tRNA(Gln) amidotransferase subunit D from Methanobrevibacter smithii (strain ATCC 35061 / DSM 861 / OCM 144 / PS).